Consider the following 170-residue polypeptide: Chorion protein S18 (170 aa).

Residues 1–17 form the signal peptide; it reads MMKFMCIFVCAIAAVSA. Residues 146-159 are compositionally biased toward low complexity; sequence AAAASSSVAGQHSG. The disordered stretch occupies residues 146–170; the sequence is AAAASSSVAGQHSGYKNSGYKNSSY. Residues 160–170 show a composition bias toward polar residues; sequence YKNSGYKNSSY.

This sequence belongs to the chorion protein S15/S18 family.

Its subcellular location is the secreted. In terms of biological role, chorion membrane (egg shell) protein; plays a role in protecting the egg from the environment. The protein is Chorion protein S18 (Cp18) of Drosophila virilis (Fruit fly).